Here is an 803-residue protein sequence, read N- to C-terminus: Zinc finger and BTB domain-containing protein 17 (803 aa).

Residues 1–104 (MDFPQHSQHV…VATFLQMQDI (104 aa)) enclose the BTB domain. A disordered region spans residues 116-295 (EPATSPGGNA…GLRSGTYGDR (180 aa)). Position 120 is a phosphoserine (Ser-120). Residues 132-142 (GGDKRAKEEKV) show a composition bias toward basic and acidic residues. Low complexity-rich tracts occupy residues 171–180 (GQAQSAASGA) and 206–217 (AAAEAEAALSES). 2 stretches are compositionally biased toward acidic residues: residues 233–244 (EQKEQEEQEEEG) and 261–272 (EAPEENENEESA). Residues 269–308 (EESAGTDSGQELGSEARGLRSGTYGDRTESKAYGSVIHKC) are interaction with MYC. C2H2-type zinc fingers lie at residues 306-328 (HKCE…IRIH), 334-356 (FSCR…EKTH), 362-384 (YGCE…KKRH), 390-412 (YRCE…QLVH), 418-440 (YQCD…LETH), 446-468 (HKCP…LKIH), 474-496 (LKCR…LRIH), 502-524 (YVCI…VRIH), 530-552 (CQCV…VRQH), 558-580 (YVCE…IRHH), 586-608 (HKCS…IIIH), 614-637 (YLCD…KTVH), and 717-739 (YACD…VRIH). Lys-397 participates in a covalent cross-link: Glycyl lysine isopeptide (Lys-Gly) (interchain with G-Cter in ubiquitin). Residue Lys-481 forms a Glycyl lysine isopeptide (Lys-Gly) (interchain with G-Cter in ubiquitin) linkage. Residues 637 to 718 (HQGKAGIKIL…EDPNTHILYA (82 aa)) are interaction with MYC. The interaction with HCFC1 stretch occupies residues 637–803 (HQGKAGIKIL…TAPECPPPAE (167 aa)). A disordered region spans residues 779–803 (RDGAEGQPALAETSPTAPECPPPAE).

It belongs to the krueppel C2H2-type zinc-finger protein family. In terms of assembly, homooligomerizes (via the BTB/POZ domain), multimerization is required for DNA binding. Interacts (via the C-terminal zinc fingers) with GIF1; the interaction results in the recruitment of MYB to the CDKN1A/p21 and CDKN1B promoters and repression of transcription. Interacts with TRAF2, interfering with the binding of UBC13 to TRAF2, and inhibiting TRAF2 E3 ligase activity. Interacts with MYC (via the C-terminal helix-loop-helix motif); the interaction inhibits ZBTB17 transactivation and growth arrest activities and renders it insoluble in the nucleus. Also interacts with HCFC1, MAGEA4 and TMPRSS11A. Interacts with BCL6; the interaction inhibits ZBTB17 transactivation activity on target genes involved in cell cycle arrest. Interacts with ZBTB49 isoform 3/ZNF509S1; this interaction blocks ZBTB17-mediated repression of RB1. Post-translationally, undergoes 'Lys-48'-linked polyubiquitination at Lys-397 and Lys-481 and subsequent proteasomal degradation in a TRAF2-dependent manner. In terms of tissue distribution, expressed in germinal center B-cells.

It is found in the nucleus. In terms of biological role, transcription factor that can function as an activator or repressor depending on its binding partners, and by targeting negative regulators of cell cycle progression. Plays a critical role in early lymphocyte development, where it is essential to prevent apoptosis in lymphoid precursors, allowing them to survive in response to IL7 and undergo proper lineage commitment. Has been shown to bind to the promoters of adenovirus major late protein and cyclin D1 and activate transcription. Required for early embryonic development during gastrulation. Represses RB1 transcription; this repression can be blocked by interaction with ZBTB49 isoform 3/ZNF509S1. The polypeptide is Zinc finger and BTB domain-containing protein 17 (ZBTB17) (Homo sapiens (Human)).